We begin with the raw amino-acid sequence, 350 residues long: tRNA uridine(34) hydroxylase (350 aa).

The Rhodanese domain maps to 146–240; that stretch reads DDPDAVFIDM…YARRAREQGL (95 aa). The Cysteine persulfide intermediate role is filled by C200. The span at 319 to 328 shows a compositional bias: basic and acidic residues; it reads RRRRAGRENG. The segment at 319-350 is disordered; it reads RRRRAGRENGNKIFNKSRGRLNSKLSIPDPAE.

It belongs to the TrhO family.

The enzyme catalyses uridine(34) in tRNA + AH2 + O2 = 5-hydroxyuridine(34) in tRNA + A + H2O. In terms of biological role, catalyzes oxygen-dependent 5-hydroxyuridine (ho5U) modification at position 34 in tRNAs. In Salmonella schwarzengrund (strain CVM19633), this protein is tRNA uridine(34) hydroxylase.